A 258-amino-acid chain; its full sequence is Transcriptional repressor AccR (258 aa).

Residues 6–61 (TQDRQAKIVELLRDEQFLAIGRLTEHFQISVATARRDLSELHEAGLLRRTHGGAVS) form the HTH deoR-type domain. The segment at residues 23–42 (LAIGRLTEHFQISVATARRD) is a DNA-binding region (H-T-H motif).

Its function is as follows. Represses opine catabolism and conjugal transfer of the nopaline Ti plasmid pTiC58. The sequence is that of Transcriptional repressor AccR (accR) from Agrobacterium fabrum (strain C58 / ATCC 33970) (Agrobacterium tumefaciens (strain C58)).